Consider the following 206-residue polypeptide: MASIYQKYSQLIAKRPLITNIITTGFLFGSGDYLAQTLYPSSSKYDYKRTLRATFYGSIIFAPIGDKWYRLLHKINFPFPKTKVSPTVSKVLNTLTKVGVDQLVFAPFIGIPLYYSVMSVLEFHDNPLQVAREKLHAHWFNTLKTNWVVWPTFQLFNFALIPVQFRLLVVNIFSIGWNCYLSSVLNHKHDFLIENITDVDKDEILI.

A run of 3 helical transmembrane segments spans residues 16–36 (PLIT…YLAQ), 103–123 (LVFA…VLEF), and 155–175 (LFNF…IFSI).

This sequence belongs to the peroxisomal membrane protein PXMP2/4 family.

The protein resides in the mitochondrion inner membrane. Functionally, may be involved in cellular response to stress. Required to maintain mitochondrial DNA (mtDNA) integrity and stability. This Debaryomyces hansenii (strain ATCC 36239 / CBS 767 / BCRC 21394 / JCM 1990 / NBRC 0083 / IGC 2968) (Yeast) protein is Protein SYM1 (SYM1).